Reading from the N-terminus, the 582-residue chain is Proline--tRNA ligase (582 aa).

This sequence belongs to the class-II aminoacyl-tRNA synthetase family. ProS type 1 subfamily. Homodimer.

The protein resides in the cytoplasm. It carries out the reaction tRNA(Pro) + L-proline + ATP = L-prolyl-tRNA(Pro) + AMP + diphosphate. Functionally, catalyzes the attachment of proline to tRNA(Pro) in a two-step reaction: proline is first activated by ATP to form Pro-AMP and then transferred to the acceptor end of tRNA(Pro). As ProRS can inadvertently accommodate and process non-cognate amino acids such as alanine and cysteine, to avoid such errors it has two additional distinct editing activities against alanine. One activity is designated as 'pretransfer' editing and involves the tRNA(Pro)-independent hydrolysis of activated Ala-AMP. The other activity is designated 'posttransfer' editing and involves deacylation of mischarged Ala-tRNA(Pro). The misacylated Cys-tRNA(Pro) is not edited by ProRS. This chain is Proline--tRNA ligase, found in Mycolicibacterium paratuberculosis (strain ATCC BAA-968 / K-10) (Mycobacterium paratuberculosis).